We begin with the raw amino-acid sequence, 464 residues long: Argininosuccinate lyase (464 aa).

This sequence belongs to the lyase 1 family. Argininosuccinate lyase subfamily.

Its subcellular location is the cytoplasm. The enzyme catalyses 2-(N(omega)-L-arginino)succinate = fumarate + L-arginine. Its pathway is amino-acid biosynthesis; L-arginine biosynthesis; L-arginine from L-ornithine and carbamoyl phosphate: step 3/3. Strongly inhibited by L-arginine. Inhibitory effects are lowered at pH 7.0 compared to those at pH 8.0. At 37 degrees Celsius and pH 7.5, activity decreases to 73% and 31% in the presence of 1 mM and 10 mM arginine, respectively. Activity also decreases to 84%, 93%, 82% and 85% in the presence of 10 mM sodium citrate, citrulline, asparatate and glutamate, respectively. Activity decreases to 96% in presence of 1 mM L-lysine. In terms of biological role, catalyzes the last step of arginine biosynthesis, the conversion of argininosuccinate into L-arginine and fumarate. The chain is Argininosuccinate lyase from Arthrospira platensis (strain NIES-39 / UTEX 3086 / IAM M-135) (Spirulina platensis).